The primary structure comprises 252 residues: Protein PF0476 (252 aa).

It belongs to the CinA family.

In Pyrococcus furiosus (strain ATCC 43587 / DSM 3638 / JCM 8422 / Vc1), this protein is Protein PF0476.